The chain runs to 132 residues: Methylglyoxal synthase (132 aa).

The MGS-like domain maps to 1 to 132; that stretch reads MNIALIAHDQ…LLEWREIEDK (132 aa). 2 residues coordinate substrate: histidine 8 and lysine 12. The active-site Proton donor/acceptor is the aspartate 60. Histidine 87 is a binding site for substrate.

The protein belongs to the methylglyoxal synthase family.

The enzyme catalyses dihydroxyacetone phosphate = methylglyoxal + phosphate. Catalyzes the formation of methylglyoxal from dihydroxyacetone phosphate. This Thermoanaerobacter pseudethanolicus (strain ATCC 33223 / 39E) (Clostridium thermohydrosulfuricum) protein is Methylglyoxal synthase.